We begin with the raw amino-acid sequence, 359 residues long: Tyrosine-protein phosphatase non-receptor type 7 (359 aa).

The tract at residues 1 to 33 is disordered; it reads MVQACEGRSRAQLPTLSLGADMTQPPPTKAPAK. The interaction with MAP kinases stretch occupies residues 38–51; the sequence is LQERRGSSVALMLD. Ser44 carries the phosphoserine modification. A Phosphothreonine modification is found at Thr66. 2 positions are modified to phosphoserine: Ser93 and Ser143. The Tyrosine-protein phosphatase domain maps to 97–349; the sequence is LEEEFLKIPS…QFLHHTLALY (253 aa). Substrate-binding positions include Asp257, 290–296, and Gln334; that span reads CSAGIGR. Catalysis depends on Cys290, which acts as the Phosphocysteine intermediate. Cys290 carries the cysteine sulfenic acid (-SOH) modification.

This sequence belongs to the protein-tyrosine phosphatase family. Non-receptor class subfamily. Post-translationally, oxidized at active site cysteine. Treatment with pervanadate (vanadate and H(2)O(2)) or with antigen enhanced oxidation of active site cysteine. Expressed in bone marrow-derived mast cells.

Its subcellular location is the cytoplasm. The protein localises to the cytoskeleton. The enzyme catalyses O-phospho-L-tyrosyl-[protein] + H2O = L-tyrosyl-[protein] + phosphate. With respect to regulation, inhibited upon FCER1A triggering. May play a role in the regulation of T and B-lymphocyte development and signal transduction. The sequence is that of Tyrosine-protein phosphatase non-receptor type 7 (Ptpn7) from Mus musculus (Mouse).